The chain runs to 389 residues: Geranylgeranyl pyrophosphate synthase A (389 aa).

Lys99, Arg102, and His131 together coordinate isopentenyl diphosphate. Residues Asp138 and Asp142 each coordinate Mg(2+). Position 147 (Arg147) interacts with dimethylallyl diphosphate. Arg148 is a binding site for isopentenyl diphosphate.

Belongs to the FPP/GGPP synthase family. Mg(2+) is required as a cofactor.

Its subcellular location is the cytoplasm. It carries out the reaction isopentenyl diphosphate + (2E)-geranyl diphosphate = (2E,6E)-farnesyl diphosphate + diphosphate. The catalysed reaction is isopentenyl diphosphate + (2E,6E)-farnesyl diphosphate = (2E,6E,10E)-geranylgeranyl diphosphate + diphosphate. The protein operates within isoprenoid biosynthesis; farnesyl diphosphate biosynthesis; farnesyl diphosphate from geranyl diphosphate and isopentenyl diphosphate: step 1/1. Its pathway is isoprenoid biosynthesis; geranylgeranyl diphosphate biosynthesis; geranylgeranyl diphosphate from farnesyl diphosphate and isopentenyl diphosphate: step 1/1. Its function is as follows. Catalyzes the trans-addition of the 2 molecules of isopentenyl diphosphate (IPP) onto geranyl diphosphate (GDP) to form geranylgeranyl pyrophosphate (GGDP). Does not catalyze the conversion of dimethylallyl diphosphate (DMAPP). This is Geranylgeranyl pyrophosphate synthase A (GGS-A) from Phomopsis amygdali (Fusicoccum amygdali).